The chain runs to 206 residues: Large ribosomal subunit protein uL4 (206 aa).

The interval 47–75 (GTQSAKTRAEVSGGGIKPWRQKGTGRARQ) is disordered.

This sequence belongs to the universal ribosomal protein uL4 family. Part of the 50S ribosomal subunit.

One of the primary rRNA binding proteins, this protein initially binds near the 5'-end of the 23S rRNA. It is important during the early stages of 50S assembly. It makes multiple contacts with different domains of the 23S rRNA in the assembled 50S subunit and ribosome. Functionally, forms part of the polypeptide exit tunnel. In Clostridium botulinum (strain 657 / Type Ba4), this protein is Large ribosomal subunit protein uL4.